Reading from the N-terminus, the 117-residue chain is Large ribosomal subunit protein uL18 (117 aa).

This sequence belongs to the universal ribosomal protein uL18 family. As to quaternary structure, part of the 50S ribosomal subunit; part of the 5S rRNA/L5/L18/L25 subcomplex. Contacts the 5S and 23S rRNAs.

Functionally, this is one of the proteins that bind and probably mediate the attachment of the 5S RNA into the large ribosomal subunit, where it forms part of the central protuberance. The chain is Large ribosomal subunit protein uL18 from Francisella philomiragia subsp. philomiragia (strain ATCC 25017 / CCUG 19701 / FSC 153 / O#319-036).